Consider the following 284-residue polypeptide: Polyamine aminopropyltransferase (284 aa).

The PABS domain maps to 2–237 (ELWYTEKHTE…GHWLFGFASK (236 aa)). Gln31 provides a ligand contact to S-methyl-5'-thioadenosine. Residues His62 and Asp86 each coordinate spermidine. S-methyl-5'-thioadenosine contacts are provided by residues Glu106 and 137 to 138 (DG). Residue Asp155 is the Proton acceptor of the active site. A spermidine-binding site is contributed by 155-158 (DSTD). An S-methyl-5'-thioadenosine-binding site is contributed by Pro162.

This sequence belongs to the spermidine/spermine synthase family. In terms of assembly, homodimer or homotetramer.

The protein localises to the cytoplasm. It catalyses the reaction S-adenosyl 3-(methylsulfanyl)propylamine + putrescine = S-methyl-5'-thioadenosine + spermidine + H(+). Its pathway is amine and polyamine biosynthesis; spermidine biosynthesis; spermidine from putrescine: step 1/1. Catalyzes the irreversible transfer of a propylamine group from the amino donor S-adenosylmethioninamine (decarboxy-AdoMet) to putrescine (1,4-diaminobutane) to yield spermidine. In Clostridium botulinum (strain Alaska E43 / Type E3), this protein is Polyamine aminopropyltransferase.